Consider the following 533-residue polypeptide: MAPKPKPWVQTEGPEKKKGRQAGREEDPFRSTAEALKAIPAEKRIIRVDPTCPLSSNPGTQVYEDYNCTLNQTNIENNNNKFYIIQLLQDSNRFFTCWNRWGRVGEVGQSKINHFTRLEDAKKDFEKKFREKTKNNWAERDHFVSHPGKYTLIEVQAEDEAQEAVVKVDRGPVRTVTKRVQPCSLDPATQKLITNIFSKEMFKNTMALMDLDVKKMPLGKLSKQQIARGFEALEALEEALKGPTDGGQSLEELSSHFYTVIPHNFGHSQPPPINSPELLQAKKDMLLVLADIELAQALQAVSEQEKTVEEVPHPLDRDYQLLKCQLQLLDSGAPEYKVIQTYLEQTGSNHRCPTLQHIWKVNQEGEEDRFQAHSKLGNRKLLWHGTNMAVVAAILTSGLRIMPHSGGRVGKGIYFASENSKSAGYVIGMKCGAHHVGYMFLGEVALGREHHINTDNPSLKSPPPGFDSVIARGHTEPDPTQDTELELDGQQVVVPQGQPVPCPEFSSSTFSQSEYLIYQESQCRLRYLLEVHL.

Residues 1–30 (MAPKPKPWVQTEGPEKKKGRQAGREEDPFR) form a disordered region. An N6-(ADP-ribosyl)lysine modification is found at K6. 4 positions are modified to ADP-ribosyl glutamic acid: E12, E15, E26, and E34. Residues 14-20 (PEKKKGR) carry the Nuclear localization signal motif. The residue at position 37 (K37) is an N6-(ADP-ribosyl)lysine. The WGR domain occupies 59–150 (GTQVYEDYNC…DHFVSHPGKY (92 aa)). ADP-ribosyl aspartic acid is present on D141. Position 163 is an ADP-ribosyl glutamic acid (E163). Residues 182–300 (PCSLDPATQK…DIELAQALQA (119 aa)) form the PARP alpha-helical domain. D210 bears the ADP-ribosyl aspartic acid mark. 5 positions are modified to ADP-ribosyl glutamic acid: E231, E309, E310, E344, and E449. Residues 313–533 (HPLDRDYQLL…RLRYLLEVHL (221 aa)) form the PARP catalytic domain. Residues 454-482 (TDNPSLKSPPPGFDSVIARGHTEPDPTQD) are disordered.

Belongs to the ARTD/PARP family. Interacts with PARP1; leading to activate PARP1 in absence of DNA. Interacts with PRKDC. Interacts with XRCC5/Ku80; the interaction is dependent on nucleic acids. Interacts with XRCC6/Ku70; the interaction is dependent on nucleic acids. Interacts with EZH2, HDAC1, HDAC2, SUZ12, YY1, LRIG3 and LIG4. Post-translationally, auto-mono-ADP-ribosylated. In terms of tissue distribution, widely expressed; the highest levels are in the kidney, skeletal muscle, liver, heart and spleen; also detected in pancreas, lung, placenta, brain, leukocytes, colon, small intestine, ovary, testis, prostate and thymus.

Its subcellular location is the nucleus. It localises to the chromosome. The protein resides in the cytoplasm. It is found in the cytoskeleton. The protein localises to the microtubule organizing center. Its subcellular location is the centrosome. It localises to the centriole. It carries out the reaction L-aspartyl-[protein] + NAD(+) = 4-O-(ADP-D-ribosyl)-L-aspartyl-[protein] + nicotinamide. The enzyme catalyses L-glutamyl-[protein] + NAD(+) = 5-O-(ADP-D-ribosyl)-L-glutamyl-[protein] + nicotinamide. It catalyses the reaction L-lysyl-[protein] + NAD(+) = N(6)-(ADP-D-ribosyl)-L-lysyl-[protein] + nicotinamide + H(+). With respect to regulation, mono-ADP-ribosyltransferase activity of PARP3 is selectively inhibited by ME0328 compound; ME0328 does not inhibit other ARTD/PARP enzymes, such as PARP1. Mono-ADP-ribosyltransferase is strongly inhibited by KU0058948 compound. Mono-ADP-ribosyltransferase that mediates mono-ADP-ribosylation of target proteins and plays a key role in the response to DNA damage. Mediates mono-ADP-ribosylation of glutamate, aspartate or lysine residues on target proteins. In contrast to PARP1 and PARP2, it is not able to mediate poly-ADP-ribosylation. Involved in DNA repair by mediating mono-ADP-ribosylation of a limited number of acceptor proteins involved in chromatin architecture and in DNA metabolism, such as histone H2B, XRCC5 and XRCC6. ADP-ribosylation follows DNA damage and appears as an obligatory step in a detection/signaling pathway leading to the reparation of DNA strand breaks. Involved in single-strand break repair by catalyzing mono-ADP-ribosylation of histone H2B on 'Glu-2' (H2BE2ADPr) of nucleosomes containing nicked DNA. Cooperates with the XRCC5-XRCC6 (Ku80-Ku70) heterodimer to limit end-resection thereby promoting accurate NHEJ. Suppresses G-quadruplex (G4) structures in response to DNA damage. Associates with a number of DNA repair factors and is involved in the response to exogenous and endogenous DNA strand breaks. Together with APLF, promotes the retention of the LIG4-XRCC4 complex on chromatin and accelerate DNA ligation during non-homologous end-joining (NHEJ). May link the DNA damage surveillance network to the mitotic fidelity checkpoint. Acts as a negative regulator of immunoglobulin class switch recombination, probably by controlling the level of AICDA /AID on the chromatin. In addition to proteins, also able to ADP-ribosylate DNA: mediates DNA mono-ADP-ribosylation of DNA strand break termini via covalent addition of a single ADP-ribose moiety to a 5'- or 3'-terminal phosphate residues in DNA containing multiple strand breaks. The protein is Protein mono-ADP-ribosyltransferase PARP3 of Homo sapiens (Human).